Reading from the N-terminus, the 390-residue chain is Argininosuccinate synthase (390 aa).

Position 6–14 (6–14 (AYSGGLDTT)) interacts with ATP. Tyrosine 84 is a binding site for L-citrulline. Glycine 114 is an ATP binding site. Positions 116, 120, and 121 each coordinate L-aspartate. Residue asparagine 120 coordinates L-citrulline. 5 residues coordinate L-citrulline: arginine 124, serine 171, serine 180, glutamate 253, and tyrosine 265.

It belongs to the argininosuccinate synthase family. Type 1 subfamily. In terms of assembly, homotetramer.

The protein localises to the cytoplasm. The enzyme catalyses L-citrulline + L-aspartate + ATP = 2-(N(omega)-L-arginino)succinate + AMP + diphosphate + H(+). The protein operates within amino-acid biosynthesis; L-arginine biosynthesis; L-arginine from L-ornithine and carbamoyl phosphate: step 2/3. This is Argininosuccinate synthase from Sulfurisphaera tokodaii (strain DSM 16993 / JCM 10545 / NBRC 100140 / 7) (Sulfolobus tokodaii).